Here is a 218-residue protein sequence, read N- to C-terminus: ATP-dependent Clp protease proteolytic subunit 2 (218 aa).

This sequence belongs to the peptidase S14 family. In terms of assembly, fourteen ClpP subunits assemble into 2 heptameric rings which stack back to back to give a disk-like structure with a central cavity, resembling the structure of eukaryotic proteasomes.

It is found in the cytoplasm. The enzyme catalyses Hydrolysis of proteins to small peptides in the presence of ATP and magnesium. alpha-casein is the usual test substrate. In the absence of ATP, only oligopeptides shorter than five residues are hydrolyzed (such as succinyl-Leu-Tyr-|-NHMec, and Leu-Tyr-Leu-|-Tyr-Trp, in which cleavage of the -Tyr-|-Leu- and -Tyr-|-Trp bonds also occurs).. In terms of biological role, cleaves peptides in various proteins in a process that requires ATP hydrolysis. Has a chymotrypsin-like activity. Plays a major role in the degradation of misfolded proteins. In Gloeobacter violaceus (strain ATCC 29082 / PCC 7421), this protein is ATP-dependent Clp protease proteolytic subunit 2.